A 292-amino-acid chain; its full sequence is Acetyl-coenzyme A carboxylase carboxyl transferase subunit beta (292 aa).

The CoA carboxyltransferase N-terminal domain occupies 36-292 (MWSKCEKCAK…LLRMHEVDYE (257 aa)). C40, C43, C59, and C62 together coordinate Zn(2+). The C4-type zinc finger occupies 40 to 62 (CEKCAKILYTEDLRENFNVCPNC).

It belongs to the AccD/PCCB family. In terms of assembly, acetyl-CoA carboxylase is a heterohexamer composed of biotin carboxyl carrier protein (AccB), biotin carboxylase (AccC) and two subunits each of ACCase subunit alpha (AccA) and ACCase subunit beta (AccD). Zn(2+) is required as a cofactor.

It is found in the cytoplasm. The catalysed reaction is N(6)-carboxybiotinyl-L-lysyl-[protein] + acetyl-CoA = N(6)-biotinyl-L-lysyl-[protein] + malonyl-CoA. It participates in lipid metabolism; malonyl-CoA biosynthesis; malonyl-CoA from acetyl-CoA: step 1/1. In terms of biological role, component of the acetyl coenzyme A carboxylase (ACC) complex. Biotin carboxylase (BC) catalyzes the carboxylation of biotin on its carrier protein (BCCP) and then the CO(2) group is transferred by the transcarboxylase to acetyl-CoA to form malonyl-CoA. The chain is Acetyl-coenzyme A carboxylase carboxyl transferase subunit beta from Clostridium perfringens (strain ATCC 13124 / DSM 756 / JCM 1290 / NCIMB 6125 / NCTC 8237 / Type A).